Reading from the N-terminus, the 140-residue chain is 3-hydroxyacyl-[acyl-carrier-protein] dehydratase FabZ (140 aa).

H48 is an active-site residue.

This sequence belongs to the thioester dehydratase family. FabZ subfamily.

It is found in the cytoplasm. It catalyses the reaction a (3R)-hydroxyacyl-[ACP] = a (2E)-enoyl-[ACP] + H2O. In terms of biological role, involved in unsaturated fatty acids biosynthesis. Catalyzes the dehydration of short chain beta-hydroxyacyl-ACPs and long chain saturated and unsaturated beta-hydroxyacyl-ACPs. The polypeptide is 3-hydroxyacyl-[acyl-carrier-protein] dehydratase FabZ (Pelotomaculum thermopropionicum (strain DSM 13744 / JCM 10971 / SI)).